Consider the following 749-residue polypeptide: Protein kinase domain-containing protein ppk32 (749 aa).

A Protein kinase domain is found at 21–317; it reads IQKENSVQVG…MFELERSPYF (297 aa). Disordered stretches follow at residues 598-677 and 706-749; these read KKLQ…VTAK and PLIP…KSLL. Polar residues predominate over residues 602 to 651; that stretch reads SKPSSVVPNRITTDPFSSQTKEATSKPSSISPNKATTNIFTSQASLSSQG. Ser632 is modified (phosphoserine). Composition is skewed to low complexity over residues 657 to 670 and 721 to 735; these read SSASSYRSYSQRAS and NRRVTTPVVNQNTVT.

Its subcellular location is the cytoplasm. The polypeptide is Protein kinase domain-containing protein ppk32 (ppk32) (Schizosaccharomyces pombe (strain 972 / ATCC 24843) (Fission yeast)).